A 257-amino-acid chain; its full sequence is GTP cyclohydrolase 1 type 2 homolog (257 aa).

Positions 65, 103, 221, and 224 each coordinate a divalent metal cation.

Belongs to the GTP cyclohydrolase I type 2/NIF3 family. Homohexamer.

In Lactococcus lactis subsp. lactis (strain IL1403) (Streptococcus lactis), this protein is GTP cyclohydrolase 1 type 2 homolog (ykiD).